Reading from the N-terminus, the 257-residue chain is Ribosomal large subunit pseudouridine synthase B (257 aa).

One can recognise an S4 RNA-binding domain in the interval Ala3 to Lys63. Asp109 (nucleophile) is an active-site residue.

This sequence belongs to the pseudouridine synthase RsuA family.

It catalyses the reaction uridine(2605) in 23S rRNA = pseudouridine(2605) in 23S rRNA. Functionally, responsible for synthesis of pseudouridine from uracil-2605 in 23S ribosomal RNA. The polypeptide is Ribosomal large subunit pseudouridine synthase B (rluB) (Buchnera aphidicola subsp. Schizaphis graminum (strain Sg)).